The sequence spans 138 residues: Basic phospholipase A2 trimucrotoxin (138 aa).

Positions 1–16 (MRTLWIVAVLLLGVEG) are cleaved as a signal peptide. 7 disulfides stabilise this stretch: Cys-42/Cys-131, Cys-44/Cys-60, Cys-59/Cys-111, Cys-65/Cys-138, Cys-66/Cys-104, Cys-73/Cys-97, and Cys-91/Cys-102. 3 residues coordinate Ca(2+): Tyr-43, Gly-45, and Gly-47. The active site involves His-63. Asp-64 serves as a coordination point for Ca(2+). Asp-105 is an active-site residue.

This sequence belongs to the phospholipase A2 family. Group II subfamily. D49 sub-subfamily. As to quaternary structure, homodimer. Requires Ca(2+) as cofactor. As to expression, expressed by the venom gland.

Its subcellular location is the secreted. The catalysed reaction is a 1,2-diacyl-sn-glycero-3-phosphocholine + H2O = a 1-acyl-sn-glycero-3-phosphocholine + a fatty acid + H(+). Snake venom phospholipase A2 (PLA2) that displays edema-inducing activities, as well as presynaptic neurotoxicity and low myotoxicity. PLA2 catalyzes the calcium-dependent hydrolysis of the 2-acyl groups in 3-sn-phosphoglycerides. This chain is Basic phospholipase A2 trimucrotoxin, found in Protobothrops mucrosquamatus (Taiwan habu).